The primary structure comprises 294 residues: Lipoyl synthase (294 aa).

[4Fe-4S] cluster contacts are provided by Cys41, Cys46, Cys52, Cys67, Cys71, Cys74, and Ser281. A Radical SAM core domain is found at 53 to 270; that stretch reads FNNGTATFMI…KLESLAMGFT (218 aa).

It belongs to the radical SAM superfamily. Lipoyl synthase family. [4Fe-4S] cluster serves as cofactor.

It localises to the cytoplasm. The enzyme catalyses [[Fe-S] cluster scaffold protein carrying a second [4Fe-4S](2+) cluster] + N(6)-octanoyl-L-lysyl-[protein] + 2 oxidized [2Fe-2S]-[ferredoxin] + 2 S-adenosyl-L-methionine + 4 H(+) = [[Fe-S] cluster scaffold protein] + N(6)-[(R)-dihydrolipoyl]-L-lysyl-[protein] + 4 Fe(3+) + 2 hydrogen sulfide + 2 5'-deoxyadenosine + 2 L-methionine + 2 reduced [2Fe-2S]-[ferredoxin]. It participates in protein modification; protein lipoylation via endogenous pathway; protein N(6)-(lipoyl)lysine from octanoyl-[acyl-carrier-protein]: step 2/2. Catalyzes the radical-mediated insertion of two sulfur atoms into the C-6 and C-8 positions of the octanoyl moiety bound to the lipoyl domains of lipoate-dependent enzymes, thereby converting the octanoylated domains into lipoylated derivatives. This chain is Lipoyl synthase, found in Baumannia cicadellinicola subsp. Homalodisca coagulata.